The following is a 138-amino-acid chain: Nucleoside diphosphate kinase (138 aa).

ATP contacts are provided by K11, F59, R87, T93, R104, and N114. H117 functions as the Pros-phosphohistidine intermediate in the catalytic mechanism.

The protein belongs to the NDK family. Mg(2+) serves as cofactor.

Its subcellular location is the cytoplasm. It carries out the reaction a 2'-deoxyribonucleoside 5'-diphosphate + ATP = a 2'-deoxyribonucleoside 5'-triphosphate + ADP. The enzyme catalyses a ribonucleoside 5'-diphosphate + ATP = a ribonucleoside 5'-triphosphate + ADP. In terms of biological role, major role in the synthesis of nucleoside triphosphates other than ATP. The ATP gamma phosphate is transferred to the NDP beta phosphate via a ping-pong mechanism, using a phosphorylated active-site intermediate. In Saccharolobus islandicus (strain Y.N.15.51 / Yellowstone #2) (Sulfolobus islandicus), this protein is Nucleoside diphosphate kinase.